Here is a 2210-residue protein sequence, read N- to C-terminus: RNA-directed RNA polymerase L (2210 aa).

Residues 26–284 (KDAFLSHCHS…KHEDNTTSDC (259 aa)) form an endonuclease region. Glu-51, Asp-89, and Glu-102 together coordinate Mn(2+). Lys-115 is an active-site residue. Residues 1172–1368 (CDMKLAVNNG…YLSSKLNKFV (197 aa)) enclose the RdRp catalytic domain. Asp-1330 contacts Mg(2+).

This sequence belongs to the Bunyavirales RNA polymerase family. As to quaternary structure, homomultimer; the oligomeric structure is essential for the polymerase activity. Interacts with nucleoprotein N. Interacts with protein Z; this interaction inhibits viral transcription and replication, Z partially blocks the product exit tunnel for the releasing nascent RNA product. Requires Mn(2+) as cofactor. It depends on Mg(2+) as a cofactor.

It is found in the virion. The protein resides in the host cytoplasm. The catalysed reaction is RNA(n) + a ribonucleoside 5'-triphosphate = RNA(n+1) + diphosphate. RNA-dependent RNA polymerase, which is responsible for the replication and transcription of the viral RNA genome using antigenomic RNA as an intermediate. During transcription, synthesizes subgenomic RNAs and assures their capping by a cap-snatching mechanism, which involves the endonuclease activity cleaving the host capped pre-mRNAs. These short capped RNAs are then used as primers for viral transcription. The 3'-end of subgenomic mRNAs molecules are heterogeneous and not polyadenylated. The replicase function is to direct synthesis of antigenomic and genomic RNA which are encapsidated and non capped. As a consequence of the use of the same enzyme for both transcription and replication, these mechanisms need to be well coordinated. These processes may be regulated by proteins N and Z in a dose-dependent manner. Z protein inhibits the viral polymerase L und thus the viral transcription and RNA synthesis. The polypeptide is RNA-directed RNA polymerase L (Tacaribe virus (strain Franze-Fernandez) (TCRV)).